The sequence spans 234 residues: Alpha N-terminal protein methyltransferase 1 (234 aa).

Residues G71, R76, 93–95, 120–121, and Q136 contribute to the S-adenosyl-L-methionine site; these read DVV and LQ.

This sequence belongs to the methyltransferase superfamily. NTM1 family. Expressed in uterine cells and PVT neurons of the tail. Expressed in pharynx, intestine and DVB tail neuron.

It carries out the reaction N-terminal L-alanyl-L-prolyl-L-lysyl-[protein] + 3 S-adenosyl-L-methionine = N-terminal N,N,N-trimethyl-L-alanyl-L-prolyl-L-lysyl-[protein] + 3 S-adenosyl-L-homocysteine + 3 H(+). The catalysed reaction is N-terminal L-seryl-L-prolyl-L-lysyl-[protein] + 3 S-adenosyl-L-methionine = N-terminal N,N,N-trimethyl-L-seryl-L-prolyl-L-lysyl-[protein] + 3 S-adenosyl-L-homocysteine + 3 H(+). The enzyme catalyses N-terminal L-prolyl-L-prolyl-L-lysyl-[protein] + 2 S-adenosyl-L-methionine = N-terminal N,N-dimethyl-L-prolyl-L-prolyl-L-lysyl-[protein] + 2 S-adenosyl-L-homocysteine + 2 H(+). Functionally, alpha-N-methyltransferase that methylates the N-terminus of target proteins containing the N-terminal motif [Ala/Pro/Ser]-Pro-Lys when the initiator Met is cleaved. Specifically catalyzes mono-, di- or tri-methylation of exposed alpha-amino group of Ala or Ser residue in the [Ala/Ser]-Pro-Lys motif and mono- or di-methylation of Pro in the Pro-Pro-Lys motif. Probably required for the synthesis of neurotransmitter melatonin from serotonin, which plays a role in promoting a sleep-like state, called lethargus, during larval development. This is Alpha N-terminal protein methyltransferase 1 from Caenorhabditis elegans.